Consider the following 469-residue polypeptide: MRHFHDTIAAIATAIVPQQGSIGIVRLSGAKAVAIAQSLFEAPGKQPWESHRILYGYVRDPQTKERVDEALLLLMLAPRSYTREDVVEFHCHGGLIPVQRVLQLCVAAGARLADPGEFTLRAFLNGRLDLTQAESVAELVAAQSTTAAQIALAGLTGKLARPLQQIRQTCLSLLAEIEARLDFTDELPPLDPAAIAEQIRQLQHQVEAFLATAERGALIRTGLKVAIVGRPNVGKSSLLNAWSRSDRAIVTDLPGTTRDIVESQLVVGGIPIQVLDTAGIRETDNLVEQIGVQRSRQAALSADLILLVIDASQGWTAADQAIYDQLQLKQRRQQAPQSVLVVLNKADLLSETTEVKDIPLPIAPIPTVLLSALSQRGIEQLEDAILHLVQGQGVSAANLDFAINQRQAGLLEQVHQSLNHVLAAIDAQLPLDFWTIDLHAAARALGTLTGEEVTESVLTEIFSRFCIGK.

(6S)-5-formyl-5,6,7,8-tetrahydrofolate contacts are provided by R26, E88, and R127. A TrmE-type G domain is found at 222 to 390 (GLKVAIVGRP…LEDAILHLVQ (169 aa)). A K(+)-binding site is contributed by N232. GTP is bound by residues 232-237 (NVGKSS), 251-257 (TDLPGTT), 276-279 (DTAG), and 344-347 (NKAD). Mg(2+) is bound at residue S236. Positions 251, 253, and 256 each coordinate K(+). T257 serves as a coordination point for Mg(2+). Position 469 (K469) interacts with (6S)-5-formyl-5,6,7,8-tetrahydrofolate.

Belongs to the TRAFAC class TrmE-Era-EngA-EngB-Septin-like GTPase superfamily. TrmE GTPase family. As to quaternary structure, homodimer. Heterotetramer of two MnmE and two MnmG subunits. K(+) serves as cofactor.

It localises to the cytoplasm. Its function is as follows. Exhibits a very high intrinsic GTPase hydrolysis rate. Involved in the addition of a carboxymethylaminomethyl (cmnm) group at the wobble position (U34) of certain tRNAs, forming tRNA-cmnm(5)s(2)U34. The polypeptide is tRNA modification GTPase MnmE (Synechococcus elongatus).